The primary structure comprises 180 residues: Large ribosomal subunit protein bL19 (180 aa).

This sequence belongs to the bacterial ribosomal protein bL19 family.

This protein is located at the 30S-50S ribosomal subunit interface and may play a role in the structure and function of the aminoacyl-tRNA binding site. The sequence is that of Large ribosomal subunit protein bL19 from Allorhizobium ampelinum (strain ATCC BAA-846 / DSM 112012 / S4) (Agrobacterium vitis (strain S4)).